The chain runs to 681 residues: Methionine--tRNA ligase (681 aa).

Positions 18 to 28 (PYANGSIHLGH) match the 'HIGH' region motif. Residues Cys149, Cys152, Cys162, and Cys165 each coordinate Zn(2+). The 'KMSKS' region motif lies at 334–338 (KMSKS). Lys337 contributes to the ATP binding site. Residues 580–681 (DFAKLDLRIV…NGAEPGQRVS (102 aa)) form the tRNA-binding domain.

It belongs to the class-I aminoacyl-tRNA synthetase family. MetG type 1 subfamily. As to quaternary structure, homodimer. It depends on Zn(2+) as a cofactor.

The protein localises to the cytoplasm. The catalysed reaction is tRNA(Met) + L-methionine + ATP = L-methionyl-tRNA(Met) + AMP + diphosphate. Is required not only for elongation of protein synthesis but also for the initiation of all mRNA translation through initiator tRNA(fMet) aminoacylation. The sequence is that of Methionine--tRNA ligase from Chromohalobacter salexigens (strain ATCC BAA-138 / DSM 3043 / CIP 106854 / NCIMB 13768 / 1H11).